Consider the following 153-residue polypeptide: Large ribosomal subunit protein uL13 (153 aa).

Residues 128–153 (SEHPHEAQSPEVLDVTSMNSKNTRSA) are disordered. Residues 143 to 153 (TSMNSKNTRSA) are compositionally biased toward polar residues.

It belongs to the universal ribosomal protein uL13 family. In terms of assembly, part of the 50S ribosomal subunit.

In terms of biological role, this protein is one of the early assembly proteins of the 50S ribosomal subunit, although it is not seen to bind rRNA by itself. It is important during the early stages of 50S assembly. This chain is Large ribosomal subunit protein uL13, found in Roseobacter denitrificans (strain ATCC 33942 / OCh 114) (Erythrobacter sp. (strain OCh 114)).